Here is a 183-residue protein sequence, read N- to C-terminus: Large ribosomal subunit protein mL43 (183 aa).

2 disordered regions span residues 120-144 (HTDNPSIQGQWTPSPTNGLPSTGCG) and 162-183 (PGALDRERDRIGSSFGFQAQAE). Residues 122-139 (DNPSIQGQWTPSPTNGLP) are compositionally biased toward polar residues. The span at 162–172 (PGALDRERDRI) shows a compositional bias: basic and acidic residues.

It belongs to the mitochondrion-specific ribosomal protein mL43 family. Component of the mitochondrial ribosome large subunit (39S) which comprises a 16S rRNA and about 50 distinct proteins. Ubiquitous with the highest levels in the liver, heart and kidneys. The skeletal muscle, brain and testis showed lower but detectable expression. Expression is coregulated with TWNK.

The protein resides in the mitochondrion. The chain is Large ribosomal subunit protein mL43 (Mrpl43) from Mus musculus (Mouse).